A 378-amino-acid polypeptide reads, in one-letter code: Polygalacturonase (378 aa).

A signal peptide spans 1-20 (MILTRSVVLGFLGSASLALA). An intrachain disulfide couples C39 to C57. PbH1 repeat units follow at residues 172–203 (SSGL…DIGD), 204–225 (SDSI…AINS), 226–246 (GTNI…SIGS), 255–276 (VETV…RVKA), and 284–306 (IKGV…TIRQ). The active-site Proton donor is D218. The cysteines at positions 220 and 236 are disulfide-linked. Residue H240 is part of the active site. Intrachain disulfides connect C346/C352 and C370/C378.

This sequence belongs to the glycosyl hydrolase 28 family.

Its subcellular location is the secreted. It catalyses the reaction (1,4-alpha-D-galacturonosyl)n+m + H2O = (1,4-alpha-D-galacturonosyl)n + (1,4-alpha-D-galacturonosyl)m.. The protein is Polygalacturonase (PEPG1) of Penicillium expansum (Blue mold rot fungus).